Here is an 87-residue protein sequence, read N- to C-terminus: Neurotoxin Cex1 (87 aa).

The signal sequence occupies residues 1 to 19 (MNSLLMITTCLVLFGTVWA). An LCN-type CS-alpha/beta domain is found at 20–85 (KEGYLVSKST…TYPIPGKSCG (66 aa)). 4 cysteine pairs are disulfide-bonded: Cys-31-Cys-84, Cys-35-Cys-60, Cys-44-Cys-65, and Cys-48-Cys-67. A Cysteine amide modification is found at Cys-84. The propeptide occupies 85–87 (GKK).

It belongs to the long (4 C-C) scorpion toxin superfamily. Sodium channel inhibitor family. Beta subfamily. Expressed by the venom gland.

It is found in the secreted. Beta toxins bind voltage-independently at site-4 of sodium channels (Nav) and shift the voltage of activation toward more negative potentials thereby affecting sodium channel activation and promoting spontaneous and repetitive firing. The protein is Neurotoxin Cex1 of Centruroides exilicauda (Bark scorpion).